The following is a 231-amino-acid chain: Small ribosomal subunit protein uS3 (231 aa).

The region spanning 39 to 107 (IRELLHKELK…DVVLNIVEIR (69 aa)) is the KH type-2 domain.

Belongs to the universal ribosomal protein uS3 family. In terms of assembly, part of the 30S ribosomal subunit. Forms a tight complex with proteins S10 and S14.

Its function is as follows. Binds the lower part of the 30S subunit head. Binds mRNA in the 70S ribosome, positioning it for translation. This chain is Small ribosomal subunit protein uS3, found in Nitrobacter winogradskyi (strain ATCC 25391 / DSM 10237 / CIP 104748 / NCIMB 11846 / Nb-255).